A 90-amino-acid chain; its full sequence is Conotoxin TxMMSK-06 (90 aa).

Residues 1–22 form the signal peptide; that stretch reads MMSKLGVLLTICLLLFPHTAVP. The propeptide occupies 23 to 74; that stretch reads LDGDQHADQPAERLQDDISSEHHPMLNSIRRREQNQFMSFTSVKLRDSRGER. Residues 24–43 form a disordered region; sequence DGDQHADQPAERLQDDISSE. Residues 25–43 are compositionally biased toward basic and acidic residues; it reads GDQHADQPAERLQDDISSE. Intrachain disulfides connect Cys-75-Cys-89, Cys-76-Cys-85, and Cys-81-Cys-88. Pro-87 is modified (4-hydroxyproline). At Cys-89 the chain carries Cysteine amide.

It belongs to the conotoxin M superfamily. Expressed by the venom duct.

The protein resides in the secreted. This is Conotoxin TxMMSK-06 from Conus textile (Cloth-of-gold cone).